A 120-amino-acid chain; its full sequence is Large ribosomal subunit protein bL20 (120 aa).

This sequence belongs to the bacterial ribosomal protein bL20 family.

Binds directly to 23S ribosomal RNA and is necessary for the in vitro assembly process of the 50S ribosomal subunit. It is not involved in the protein synthesizing functions of that subunit. This is Large ribosomal subunit protein bL20 from Desulforudis audaxviator (strain MP104C).